The primary structure comprises 173 residues: Crossover junction endodeoxyribonuclease RuvC (173 aa).

Residues D8, E67, and D139 contribute to the active site. Residues D8, E67, and D139 each contribute to the Mg(2+) site.

The protein belongs to the RuvC family. As to quaternary structure, homodimer which binds Holliday junction (HJ) DNA. The HJ becomes 2-fold symmetrical on binding to RuvC with unstacked arms; it has a different conformation from HJ DNA in complex with RuvA. In the full resolvosome a probable DNA-RuvA(4)-RuvB(12)-RuvC(2) complex forms which resolves the HJ. Mg(2+) is required as a cofactor.

It is found in the cytoplasm. The catalysed reaction is Endonucleolytic cleavage at a junction such as a reciprocal single-stranded crossover between two homologous DNA duplexes (Holliday junction).. In terms of biological role, the RuvA-RuvB-RuvC complex processes Holliday junction (HJ) DNA during genetic recombination and DNA repair. Endonuclease that resolves HJ intermediates. Cleaves cruciform DNA by making single-stranded nicks across the HJ at symmetrical positions within the homologous arms, yielding a 5'-phosphate and a 3'-hydroxyl group; requires a central core of homology in the junction. The consensus cleavage sequence is 5'-(A/T)TT(C/G)-3'. Cleavage occurs on the 3'-side of the TT dinucleotide at the point of strand exchange. HJ branch migration catalyzed by RuvA-RuvB allows RuvC to scan DNA until it finds its consensus sequence, where it cleaves and resolves the cruciform DNA. This is Crossover junction endodeoxyribonuclease RuvC from Baumannia cicadellinicola subsp. Homalodisca coagulata.